Reading from the N-terminus, the 65-residue chain is Large ribosomal subunit protein bL32 (65 aa).

The segment covering 1–19 (MAVQKSRKTPSKRGMRRSH) has biased composition (basic residues). Positions 1–32 (MAVQKSRKTPSKRGMRRSHNALVKSTLSEDQE) are disordered.

Belongs to the bacterial ribosomal protein bL32 family.

The chain is Large ribosomal subunit protein bL32 from Vesicomyosocius okutanii subsp. Calyptogena okutanii (strain HA).